The following is a 255-amino-acid chain: Type III pantothenate kinase (255 aa).

6-13 is an ATP binding site; the sequence is DVGNTNTV. Substrate-binding positions include Tyr100 and 107–110; that span reads GADR. The active-site Proton acceptor is the Asp109. Asp129 is a K(+) binding site. Thr132 is a binding site for ATP. Residue Thr184 coordinates substrate.

Belongs to the type III pantothenate kinase family. As to quaternary structure, homodimer. NH4(+) is required as a cofactor. K(+) serves as cofactor.

Its subcellular location is the cytoplasm. It catalyses the reaction (R)-pantothenate + ATP = (R)-4'-phosphopantothenate + ADP + H(+). The protein operates within cofactor biosynthesis; coenzyme A biosynthesis; CoA from (R)-pantothenate: step 1/5. In terms of biological role, catalyzes the phosphorylation of pantothenate (Pan), the first step in CoA biosynthesis. The protein is Type III pantothenate kinase of Syntrophomonas wolfei subsp. wolfei (strain DSM 2245B / Goettingen).